The primary structure comprises 206 residues: Large ribosomal subunit protein uL4 (206 aa).

A disordered region spans residues 55 to 80 (AFVSGGGAKPWRQKGTGRARSGSNRS).

The protein belongs to the universal ribosomal protein uL4 family. Part of the 50S ribosomal subunit.

In terms of biological role, one of the primary rRNA binding proteins, this protein initially binds near the 5'-end of the 23S rRNA. It is important during the early stages of 50S assembly. It makes multiple contacts with different domains of the 23S rRNA in the assembled 50S subunit and ribosome. Forms part of the polypeptide exit tunnel. This is Large ribosomal subunit protein uL4 from Nitratidesulfovibrio vulgaris (strain DSM 19637 / Miyazaki F) (Desulfovibrio vulgaris).